Here is a 340-residue protein sequence, read N- to C-terminus: MVRKMNKLAKRLASTSKSRQPEPESDSDGSEFDFDNAIEEKPMEAMDIEEVESDGDDDERELQAAFAAGLLKDGLNIQVAKKRPIINKSAEMKEKLAEITKDLPWVETLEVVTPHSEMDKKVENDDFQRELNFYKQAEKAVQIAYPRLLNLGIKVLRPTDYYAEMAKSDTHMQKVRKRLLGIQEMKERQEAFRRIREEKKFAVKVQKEVLAAKNTEKKNLAEAVKKHKKGMKQQLEDMLNNVKRHGLDQDDDAPTGAFGDRLGGRGGAGRGGAGRGGSMRNAGELKRKLKSDKFGYGGKKKGMKRNNKESFNDLFGAPRGGFGGRGRGGGRGGRGGRGRR.

Over residues 1–10 (MVRKMNKLAK) the composition is skewed to basic residues. 2 disordered regions span residues 1-59 (MVRK…DDDE) and 245-340 (HGLD…RGRR). Composition is skewed to acidic residues over residues 23–37 (PESD…FDNA) and 46–59 (MDIE…DDDE). Residues 206-245 (QKEVLAAKNTEKKNLAEAVKKHKKGMKQQLEDMLNNVKRH) adopt a coiled-coil conformation. Composition is skewed to gly residues over residues 264-277 (GRGG…GRGG) and 318-333 (PRGG…GRGG).

This sequence belongs to the EBP2 family.

Its subcellular location is the nucleus. The protein resides in the nucleolus. Functionally, required for the processing of the 27S pre-rRNA. The polypeptide is Probable rRNA-processing protein EBP2 homolog (Caenorhabditis elegans).